We begin with the raw amino-acid sequence, 336 residues long: Toluate 1,2-dioxygenase electron transfer component (336 aa).

The 2Fe-2S ferredoxin-type domain maps to 3-97 (HKVATDFEDG…DCVIRVPAAS (95 aa)). Residues C40, C45, C48, and C81 each coordinate [2Fe-2S] cluster. The interval 99–336 (VCKTQQAGYQ…FYYEKFAASA (238 aa)) is ferredoxin-reductase. The FAD-binding FR-type domain occupies 104–204 (QAGYQAAISN…AGPLGAFYLR (101 aa)).

The protein belongs to the bacterial ring-hydroxylating dioxygenase ferredoxin reductase family. In terms of assembly, this dioxygenase system consists of three proteins: the two subunits of the hydroxylase component (XylX and XylY), and an electron transfer component (XylZ). The cofactor is FAD. [2Fe-2S] cluster serves as cofactor.

The enzyme catalyses 2 reduced [2Fe-2S]-[ferredoxin] + NAD(+) + H(+) = 2 oxidized [2Fe-2S]-[ferredoxin] + NADH. Its function is as follows. Electron transfer component of toluate 1,2-dioxygenase system. The polypeptide is Toluate 1,2-dioxygenase electron transfer component (xylZ) (Pseudomonas putida (Arthrobacter siderocapsulatus)).